The sequence spans 273 residues: Undecaprenyl-diphosphatase (273 aa).

8 helical membrane passes run 3–23, 48–68, 92–112, 116–136, 152–172, 193–213, 220–240, and 252–272; these read IVEI…EFAP, AANT…VVVF, MQVI…EDYI, LFST…MIAA, ITYK…WPGF, ADFT…LSLL, TIDA…FALI, and IRLV…YIVY.

Belongs to the UppP family.

It is found in the cell membrane. It catalyses the reaction di-trans,octa-cis-undecaprenyl diphosphate + H2O = di-trans,octa-cis-undecaprenyl phosphate + phosphate + H(+). In terms of biological role, catalyzes the dephosphorylation of undecaprenyl diphosphate (UPP). Confers resistance to bacitracin. In Geobacillus sp. (strain WCH70), this protein is Undecaprenyl-diphosphatase.